Consider the following 148-residue polypeptide: uncharacterized protein (148 aa).

The tract at residues 55 to 148 (KMRCGESGAG…RNQGQLYPQP (94 aa)) is disordered. Polar residues predominate over residues 68 to 104 (RSNSAEVSSSQPALASKSQSKWGPTSNNPRGALTTTE).

This is an uncharacterized protein from Homo sapiens (Human).